The sequence spans 476 residues: FAD-dependent monooxygenase ausM (476 aa).

Residues E41, G55, and R114 each coordinate FAD. Y222 is an active-site residue. The FAD site is built by D314 and A327. The chain crosses the membrane as a helical span at residues 447–467 (LGSTPIHMLTLLLPCLFYFMY).

The protein belongs to the paxM FAD-dependent monooxygenase family. FAD is required as a cofactor.

It localises to the membrane. It participates in secondary metabolite biosynthesis; terpenoid biosynthesis. In terms of biological role, FAD-dependent monooxygenase; part of the gene cluster A that mediates the biosynthesis of the fungal meroterpenoid acetoxydehydroaustin. The first step of the pathway is the synthesis of 3,5-dimethylorsellinic acid by the polyketide synthase ausA. 3,5-dimethylorsellinic acid is then prenylated by the polyprenyl transferase ausN. Further epoxidation by the FAD-dependent monooxygenase ausM and cyclization by the probable terpene cyclase ausL lead to the formation of protoaustinoid A. Protoaustinoid A is then oxidized to spiro-lactone preaustinoid A3 by the combined action of the FAD-binding monooxygenases ausB and ausC, and the dioxygenase ausE. Acid-catalyzed keto-rearrangement and ring contraction of the tetraketide portion of preaustinoid A3 by ausJ lead to the formation of preaustinoid A4. The aldo-keto reductase ausK, with the help of ausH, is involved in the next step by transforming preaustinoid A4 into isoaustinone which is in turn hydroxylated by the P450 monooxygenase ausI to form austinolide. The cytochrome P450 monooxygenase ausG then modifies austinolide to austinol. Austinol is further acetylated to austin by the O-acetyltransferase ausP, which spontaneously changes to dehydroaustin. The cytochrome P450 monooxygenase then converts dehydroaustin is into 7-dehydrodehydroaustin. The hydroxylation catalyzed by ausR permits the second O-acetyltransferase ausQ to add an additional acetyl group to the molecule, leading to the formation of acetoxydehydroaustin. Due to genetic rearrangements of the clusters and the subsequent loss of some enzymes, the end product of the Penicillium brasilianum austinoid biosynthesis clusters is acetoxydehydroaustin. The polypeptide is FAD-dependent monooxygenase ausM (Penicillium brasilianum).